Here is a 294-residue protein sequence, read N- to C-terminus: HTH-type transcriptional regulator TcbR (294 aa).

The HTH lysR-type domain occupies Met-1 to Thr-58. A DNA-binding region (H-T-H motif) is located at residues Met-18 to Gln-37.

This sequence belongs to the LysR transcriptional regulatory family.

In terms of biological role, involved in regulation of chlorinated catechol metabolism. Transcriptional activator of the tcbCDEF chlorocatechol oxidative operon. May bind 2-chloromuconate as an inducer. The chain is HTH-type transcriptional regulator TcbR (tcbR) from Pseudomonas sp. (strain P51).